A 346-amino-acid chain; its full sequence is Nitrilase 3 (346 aa).

N-acetylserine is present on Ser-2. A CN hydrolase domain is found at 25–297 (VRVTIVQSST…EGLVTADLDL (273 aa)). Glu-65 serves as the catalytic Proton acceptor. Catalysis depends on Lys-152, which acts as the Proton donor. Cys-186 functions as the Nucleophile in the catalytic mechanism.

Belongs to the carbon-nitrogen hydrolase superfamily. Nitrilase family.

It localises to the cell membrane. It catalyses the reaction a nitrile + 2 H2O = a carboxylate + NH4(+). Its function is as follows. Can convert indole-3-acetonitrile to the plant hormone indole-3-acetic acid. The polypeptide is Nitrilase 3 (NIT3) (Arabidopsis thaliana (Mouse-ear cress)).